The sequence spans 273 residues: Shikimate dehydrogenase (NADP(+)) (273 aa).

Shikimate-binding positions include 15-17 (SLS) and T62. K66 (proton acceptor) is an active-site residue. E78 serves as a coordination point for NADP(+). Shikimate-binding residues include N87 and D102. NADP(+)-binding positions include 126 to 130 (GAGGA), 149 to 154 (NRTPER), I215, and G238.

The protein belongs to the shikimate dehydrogenase family. Homodimer.

It catalyses the reaction shikimate + NADP(+) = 3-dehydroshikimate + NADPH + H(+). Its pathway is metabolic intermediate biosynthesis; chorismate biosynthesis; chorismate from D-erythrose 4-phosphate and phosphoenolpyruvate: step 4/7. Functionally, involved in the biosynthesis of the chorismate, which leads to the biosynthesis of aromatic amino acids. Catalyzes the reversible NADPH linked reduction of 3-dehydroshikimate (DHSA) to yield shikimate (SA). This chain is Shikimate dehydrogenase (NADP(+)), found in Desulfitobacterium hafniense (strain Y51).